The sequence spans 349 residues: Ribonucleoside-diphosphate reductase small chain (349 aa).

Residues aspartate 99, glutamate 130, and histidine 133 each contribute to the Fe cation site. Tyrosine 137 is a catalytic residue. The Fe cation site is built by glutamate 192, glutamate 226, and histidine 229.

It belongs to the ribonucleoside diphosphate reductase small chain family. In terms of assembly, heterodimer of a large and a small subunit. Requires Fe cation as cofactor.

The catalysed reaction is a 2'-deoxyribonucleoside 5'-diphosphate + [thioredoxin]-disulfide + H2O = a ribonucleoside 5'-diphosphate + [thioredoxin]-dithiol. Functionally, provides the precursors necessary for DNA synthesis. Catalyzes the biosynthesis of deoxyribonucleotides from the corresponding ribonucleotides. This is Ribonucleoside-diphosphate reductase small chain (RNR2) from Plasmodium falciparum (isolate Dd2).